The primary structure comprises 151 residues: UPF0208 membrane protein YfbV (151 aa).

The next 2 membrane-spanning stretches (helical) occupy residues tyrosine 46–leucine 65 and leucine 69–glycine 91.

Belongs to the UPF0208 family.

The protein localises to the cell inner membrane. This chain is UPF0208 membrane protein YfbV, found in Escherichia coli O1:K1 / APEC.